Here is a 318-residue protein sequence, read N- to C-terminus: Pantothenate kinase (318 aa).

Residue 96 to 103 coordinates ATP; it reads GSVSVGKS.

This sequence belongs to the prokaryotic pantothenate kinase family.

Its subcellular location is the cytoplasm. The enzyme catalyses (R)-pantothenate + ATP = (R)-4'-phosphopantothenate + ADP + H(+). It participates in cofactor biosynthesis; coenzyme A biosynthesis; CoA from (R)-pantothenate: step 1/5. In Bradyrhizobium sp. (strain BTAi1 / ATCC BAA-1182), this protein is Pantothenate kinase.